Consider the following 168-residue polypeptide: Phosphopantetheine adenylyltransferase (168 aa).

S9 is a substrate binding site. ATP-binding positions include 9-10 and H17; that span reads SF. Positions 41, 73, and 87 each coordinate substrate. ATP-binding positions include 88 to 90, E98, and 123 to 129; these read GMR and WIYTSSS.

It belongs to the bacterial CoaD family. Homohexamer. Mg(2+) serves as cofactor.

It is found in the cytoplasm. It catalyses the reaction (R)-4'-phosphopantetheine + ATP + H(+) = 3'-dephospho-CoA + diphosphate. It participates in cofactor biosynthesis; coenzyme A biosynthesis; CoA from (R)-pantothenate: step 4/5. Its function is as follows. Reversibly transfers an adenylyl group from ATP to 4'-phosphopantetheine, yielding dephospho-CoA (dPCoA) and pyrophosphate. In Desulfosudis oleivorans (strain DSM 6200 / JCM 39069 / Hxd3) (Desulfococcus oleovorans), this protein is Phosphopantetheine adenylyltransferase.